We begin with the raw amino-acid sequence, 219 residues long: Large ribosomal subunit protein bL25 (219 aa).

A disordered region spans residues 193 to 219 (VSSTELEETPEVPASAVPTTDQGESAE). Over residues 209-219 (VPTTDQGESAE) the composition is skewed to polar residues.

This sequence belongs to the bacterial ribosomal protein bL25 family. CTC subfamily. Part of the 50S ribosomal subunit; part of the 5S rRNA/L5/L18/L25 subcomplex. Contacts the 5S rRNA. Binds to the 5S rRNA independently of L5 and L18.

Its function is as follows. This is one of the proteins that binds to the 5S RNA in the ribosome where it forms part of the central protuberance. This Legionella pneumophila (strain Corby) protein is Large ribosomal subunit protein bL25.